We begin with the raw amino-acid sequence, 429 residues long: Palmitoyltransferase SWF1 (429 aa).

At 1 to 3 (MGT) the chain is on the lumenal side. A helical transmembrane segment spans residues 4 to 24 (IAIIAAVILGISFMTFVAFFG). The Cytoplasmic portion of the chain corresponds to 25–79 (RLPALRNTPISFLHRLIWIHLPNGILTVDRTLTNGRLTTSLTRLGRHLWYDQHPT). Residues 80–100 (ILIFFFLLLSVGEYLYLPVAW) form a helical membrane-spanning segment. At 101-112 (PHFSFTHKFFGT) the chain is on the lumenal side. The chain crosses the membrane as a helical span at residues 113 to 133 (IAILCPYIFLYLSAYTDPGVI). Over 134–201 (NAKTHVREMA…CVGANNQRWF (68 aa)) the chain is Cytoplasmic. The DHHC domain occupies 156-206 (TSCETCHLLKPARSKHCSICKKCVGRMDHHCIFINNCVGANNQRWFILLLL). A helical membrane pass occupies residues 202 to 222 (ILLLLSTAILTLYGGVLGLVI). Residues 223 to 274 (IRAKIQARFPYWTLMPWWTSTQAWNSGDLDFHRWLLLWSWGLQSGVAMGGVT) lie on the Lumenal side of the membrane. The chain crosses the membrane as a helical span at residues 275-295 (LLALLTTPLVWGLLGYHLWLV). The Cytoplasmic segment spans residues 296–429 (YCGTTTNESM…ERGRNRRRSS (134 aa)). Residues 408–421 (GRSPVDEREFGRER) show a composition bias toward basic and acidic residues. The segment at 408-429 (GRSPVDEREFGRERGRNRRRSS) is disordered.

The protein belongs to the DHHC palmitoyltransferase family. SWF1 subfamily.

It is found in the endoplasmic reticulum membrane. The catalysed reaction is L-cysteinyl-[protein] + hexadecanoyl-CoA = S-hexadecanoyl-L-cysteinyl-[protein] + CoA. In terms of biological role, palmitoyltransferase that targets several endosomal SNAREs. Palmitoylates the SNAREs at cysteine residues close to the cytoplasmic end of their transmembrane domain. May have a role in the cellular quality control of transmembrane domain-containing proteins. The polypeptide is Palmitoyltransferase SWF1 (swf-1) (Neurospora crassa (strain ATCC 24698 / 74-OR23-1A / CBS 708.71 / DSM 1257 / FGSC 987)).